We begin with the raw amino-acid sequence, 468 residues long: ATP synthase subunit beta (468 aa).

Position 148–155 (148–155 (GGAGVGKT)) interacts with ATP.

This sequence belongs to the ATPase alpha/beta chains family. In terms of assembly, F-type ATPases have 2 components, CF(1) - the catalytic core - and CF(0) - the membrane proton channel. CF(1) has five subunits: alpha(3), beta(3), gamma(1), delta(1), epsilon(1). CF(0) has three main subunits: a(1), b(2) and c(9-12). The alpha and beta chains form an alternating ring which encloses part of the gamma chain. CF(1) is attached to CF(0) by a central stalk formed by the gamma and epsilon chains, while a peripheral stalk is formed by the delta and b chains.

It localises to the cell inner membrane. It carries out the reaction ATP + H2O + 4 H(+)(in) = ADP + phosphate + 5 H(+)(out). Its function is as follows. Produces ATP from ADP in the presence of a proton gradient across the membrane. The catalytic sites are hosted primarily by the beta subunits. The polypeptide is ATP synthase subunit beta (Xanthomonas axonopodis pv. citri (strain 306)).